A 612-amino-acid polypeptide reads, in one-letter code: FAD-linked oxidoreductase easE (612 aa).

The 185-residue stretch at 129–313 (HQGRIPLYSA…TRATMRVFPD (185 aa)) folds into the FAD-binding PCMH-type domain.

Belongs to the oxygen-dependent FAD-linked oxidoreductase family. FAD is required as a cofactor.

The protein operates within alkaloid biosynthesis; ergot alkaloid biosynthesis. In terms of biological role, FAD-linked oxidoreductase; part of the gene cluster that mediates the biosynthesis of fungal ergot alkaloid. DmaW catalyzes the first step of ergot alkaloid biosynthesis by condensing dimethylallyl diphosphate (DMAP) and tryptophan to form 4-dimethylallyl-L-tryptophan. The second step is catalyzed by the methyltransferase easF that methylates 4-dimethylallyl-L-tryptophan in the presence of S-adenosyl-L-methionine, resulting in the formation of 4-dimethylallyl-L-abrine. The catalase easC and the FAD-dependent oxidoreductase easE then transform 4-dimethylallyl-L-abrine to chanoclavine-I which is further oxidized by easD in the presence of NAD(+), resulting in the formation of chanoclavine-I aldehyde. Chanoclavine-I aldehyde is the precursor of ergoamides and ergopeptines in Clavicipitaceae, and clavine-type alcaloids such as fumiclavine in Trichocomaceae. However, the metabolites downstream of chanoclavine-I aldehyde in Arthrodermataceae have not been identified yet. The polypeptide is FAD-linked oxidoreductase easE (Arthroderma otae (strain ATCC MYA-4605 / CBS 113480) (Microsporum canis)).